Here is a 114-residue protein sequence, read N- to C-terminus: Large ribosomal subunit protein uL22 (114 aa).

This sequence belongs to the universal ribosomal protein uL22 family. In terms of assembly, part of the 50S ribosomal subunit.

Its function is as follows. This protein binds specifically to 23S rRNA; its binding is stimulated by other ribosomal proteins, e.g. L4, L17, and L20. It is important during the early stages of 50S assembly. It makes multiple contacts with different domains of the 23S rRNA in the assembled 50S subunit and ribosome. Functionally, the globular domain of the protein is located near the polypeptide exit tunnel on the outside of the subunit, while an extended beta-hairpin is found that lines the wall of the exit tunnel in the center of the 70S ribosome. The chain is Large ribosomal subunit protein uL22 from Streptococcus pyogenes serotype M5 (strain Manfredo).